The chain runs to 100 residues: Urease subunit gamma (100 aa).

Belongs to the urease gamma subunit family. In terms of assembly, heterotrimer of UreA (gamma), UreB (beta) and UreC (alpha) subunits. Three heterotrimers associate to form the active enzyme.

The protein localises to the cytoplasm. The enzyme catalyses urea + 2 H2O + H(+) = hydrogencarbonate + 2 NH4(+). Its pathway is nitrogen metabolism; urea degradation; CO(2) and NH(3) from urea (urease route): step 1/1. The chain is Urease subunit gamma from Shewanella halifaxensis (strain HAW-EB4).